The chain runs to 318 residues: Protease HtpX homolog (318 aa).

Transmembrane regions (helical) follow at residues 6–26 (TAMLLAFMTALFMFVGFLIGG) and 28–48 (AGMMIAFLIAAGMNFFSYWNS). Residue His130 coordinates Zn(2+). Glu131 is an active-site residue. Zn(2+) is bound at residue His134. A run of 2 helical transmembrane segments spans residues 145 to 165 (ITATLAGAISMLGNFAFFFGG) and 173 to 193 (PLGFVGVLVAMIVAPLAAMLV). Glu202 contributes to the Zn(2+) binding site. Positions 284–318 (NVSTGPVRAVNPTRKSRSVPNTGRGGSQPPRGPWS) are disordered.

It belongs to the peptidase M48B family. The cofactor is Zn(2+).

The protein localises to the cell inner membrane. The chain is Protease HtpX homolog from Rhizobium etli (strain CIAT 652).